The chain runs to 618 residues: Pyocin-S1 (618 aa).

This sequence belongs to the colicin/pyosin nuclease family. As to quaternary structure, purified pyocin S1 makes up a complex of the two (large and small) proteins. The large protein, but not the pyocin complex, shows in vitro DNase activity.

Causes breakdown of chromosomal DNA as well as complete inhibition of lipid synthesis in sensitive cells. This chain is Pyocin-S1 (pys1), found in Pseudomonas aeruginosa.